A 271-amino-acid polypeptide reads, in one-letter code: MSSRVCYHINGPFFIIKLIDPKHLNSLTFEDFVYIALLLHKANDIDSVLFTVLQSSGKYFSSGGKFSAVNKLNDGDVTSEVEKVSKLVSAISSPNIFVANAFAIHKKVLVCCLNGPAIGLSASLVALCDIVYSQNDSVFLLFPFSNLGFVAEVGTSVTLTQKLGINSANEHMIFSTPVLFKELIGTIITKNYQLTNTETFNEKVLQDIKQNLEGLYPKSVLGMKELLHSEMKQKLIKAQAMETNGTLPFWASGEPFKRFKQLQEGNRRHKL.

Substrate contacts are provided by residues 62–66 (SGGKF) and Leu120. The active-site Proton donor/acceptor is the Glu152. Positions 269-271 (HKL) match the Peroxisome targeting signal (PTS1) motif.

This sequence belongs to the enoyl-CoA hydratase/isomerase family. Interacts with ECI1.

It is found in the peroxisome. It carries out the reaction a (3E,5Z)-dienoyl-CoA = a (2E,4E)-(5,6-saturated)-dienoyl-CoA. Its pathway is lipid metabolism; fatty acid beta-oxidation. Functionally, peroxisomal di-isomerase that is involved in fatty acid metabolism enzyme by converting 3,5-dienoyl-CoAs to the corresponding 2,4-dienoyl-CoAs. Required for ECI1 to be located to the peroxisome. The chain is Delta(3,5)-Delta(2,4)-dienoyl-CoA isomerase from Saccharomyces cerevisiae (strain ATCC 204508 / S288c) (Baker's yeast).